The chain runs to 219 residues: Cytidylate kinase (219 aa).

21–29 provides a ligand contact to ATP; that stretch reads GPAASGKGT.

This sequence belongs to the cytidylate kinase family. Type 1 subfamily.

The protein localises to the cytoplasm. The enzyme catalyses CMP + ATP = CDP + ADP. It carries out the reaction dCMP + ATP = dCDP + ADP. The polypeptide is Cytidylate kinase (Rickettsia typhi (strain ATCC VR-144 / Wilmington)).